A 543-amino-acid chain; its full sequence is CTP synthase (543 aa).

Residues 1-265 form an amidoligase domain region; it reads MARYIFITGG…DDEVLAAFGI (265 aa). Ser-13 provides a ligand contact to CTP. Ser-13 contacts UTP. 14-19 contributes to the ATP binding site; the sequence is SLGKGL. Residue Tyr-54 coordinates L-glutamine. An ATP-binding site is contributed by Asp-71. 2 residues coordinate Mg(2+): Asp-71 and Glu-139. CTP-binding positions include 146 to 148, 186 to 191, and Lys-222; these read DIE and KTKPTQ. UTP contacts are provided by residues 186–191 and Lys-222; that span reads KTKPTQ. 238 to 240 is a binding site for ATP; that stretch reads RDA. A Glutamine amidotransferase type-1 domain is found at 291–542; the sequence is TIAIVGKYTG…IQAAVVQSRL (252 aa). Residue Gly-353 participates in L-glutamine binding. Cys-380 acts as the Nucleophile; for glutamine hydrolysis in catalysis. L-glutamine contacts are provided by residues 381–384, Glu-404, and Arg-470; that span reads FGMQ. Residues His-515 and Glu-517 contribute to the active site.

Belongs to the CTP synthase family. In terms of assembly, homotetramer.

It carries out the reaction UTP + L-glutamine + ATP + H2O = CTP + L-glutamate + ADP + phosphate + 2 H(+). The catalysed reaction is L-glutamine + H2O = L-glutamate + NH4(+). It catalyses the reaction UTP + NH4(+) + ATP = CTP + ADP + phosphate + 2 H(+). It functions in the pathway pyrimidine metabolism; CTP biosynthesis via de novo pathway; CTP from UDP: step 2/2. With respect to regulation, allosterically activated by GTP, when glutamine is the substrate; GTP has no effect on the reaction when ammonia is the substrate. The allosteric effector GTP functions by stabilizing the protein conformation that binds the tetrahedral intermediate(s) formed during glutamine hydrolysis. Inhibited by the product CTP, via allosteric rather than competitive inhibition. Catalyzes the ATP-dependent amination of UTP to CTP with either L-glutamine or ammonia as the source of nitrogen. Regulates intracellular CTP levels through interactions with the four ribonucleotide triphosphates. This chain is CTP synthase, found in Nitrobacter winogradskyi (strain ATCC 25391 / DSM 10237 / CIP 104748 / NCIMB 11846 / Nb-255).